The chain runs to 135 residues: Small ribosomal subunit protein bS16m/bS16c (135 aa).

The transit peptide at Met1–Leu7 directs the protein to the chloroplast and mitochondrion. A disordered region spans residues Pro87–Ala135. Residues Gln124–Ala135 show a composition bias toward basic and acidic residues.

Belongs to the bacterial ribosomal protein bS16 family. In terms of assembly, component of the mitochondrial ribosome small subunit. In terms of tissue distribution, expressed at low levels in flowers, and, to a lower extent, in leaves, stems and roots.

Its subcellular location is the mitochondrion. It localises to the plastid. It is found in the chloroplast. This chain is Small ribosomal subunit protein bS16m/bS16c, found in Arabidopsis thaliana (Mouse-ear cress).